Reading from the N-terminus, the 271-residue chain is MTNLPKVTIRDLAESGVHFGHKVSRWNAKMAPYIYGVHQQNRIHIIDLRKTLPLLEAAMKALYDVASQDGRILFVGTKFQALDIVASEAVRCGQYYVNDRWLGGMLTNWNTVSSSIKTLIQYEKILNDEDSILTKKELGNIEKKRKKLDKELGGIREMGAVPDILFIIDTNKEHIAVKEAKKLGIPVVGVLDTNSDPDDIAYPISGNDDSRKSIELYCKLAADSILAGIESSLTRSRVKDDELIQEKEGGIVQTKKKRMKDETEREVIVSK.

It belongs to the universal ribosomal protein uS2 family.

The chain is Small ribosomal subunit protein uS2 from Wolbachia pipientis subsp. Culex pipiens (strain wPip).